Reading from the N-terminus, the 1459-residue chain is Endogenous retrovirus group K member 7 Pol protein (1459 aa).

Residues 57 to 245 (LEKGHIEPSF…TPFHYLGMQI (189 aa)) enclose the Reverse transcriptase domain. The LPQG motif lies at 161-164 (LPQG). The short motif at 195 to 198 (YIDD) is the YXDD element. The 131-residue stretch at 460-590 (LENALTVFTD…ADLLVSSALI (131 aa)) folds into the RNase H type-1 domain. Asp469, Glu497, Asp517, and Asp582 together coordinate Mg(2+). The Integrase-type zinc finger occupies 587–628 (SALIKAQELHALTHVNAAGLKNKFDVTWKQAKDIVQHCTQCQ). 4 residues coordinate Zn(2+): His596, His600, Cys624, and Cys627. The 162-residue stretch at 642–803 (RGLCPNALWQ…TSAEQHLTGK (162 aa)) folds into the Integrase catalytic domain. The integrase-type DNA-binding region spans 811–859 (KLIWWKDNKNKTWEIGKVITWGRGFACVSPGENQLPVWIPTRHLKFYNE).

The protein belongs to the beta type-B retroviral polymerase family. HERV class-II K(HML-2) pol subfamily.

The enzyme catalyses DNA(n) + a 2'-deoxyribonucleoside 5'-triphosphate = DNA(n+1) + diphosphate. It carries out the reaction Endonucleolytic cleavage to 5'-phosphomonoester.. Its function is as follows. Early post-infection, the reverse transcriptase converts the viral RNA genome into double-stranded viral DNA. The RNase H domain of the reverse transcriptase performs two functions. It degrades the RNA template and specifically removes the RNA primer from the RNA/DNA hybrid. Following nuclear import, the integrase catalyzes the insertion of the linear, double-stranded viral DNA into the host cell chromosome. Endogenous Pol proteins may have kept, lost or modified their original function during evolution. This is Endogenous retrovirus group K member 7 Pol protein (ERVK-7) from Homo sapiens (Human).